The chain runs to 74 residues: Protein krueppel (74 aa).

C2H2-type zinc fingers lie at residues 1 to 4, 10 to 32, 38 to 60, and 66 to 74; these read ERTH, FKCP…MRLH, YHCS…LRVH, and YTCEICKAK.

Belongs to the krueppel C2H2-type zinc-finger protein family.

Its subcellular location is the nucleus. Functionally, krueppel is a gap class segmentation protein. The polypeptide is Protein krueppel (Kr) (Bradysia coprophila (Dark-winged fungus gnat)).